Consider the following 437-residue polypeptide: tRNA(Ile)-lysidine synthase (437 aa).

22–27 (SGGLDS) contacts ATP.

Belongs to the tRNA(Ile)-lysidine synthase family.

It is found in the cytoplasm. The enzyme catalyses cytidine(34) in tRNA(Ile2) + L-lysine + ATP = lysidine(34) in tRNA(Ile2) + AMP + diphosphate + H(+). Ligates lysine onto the cytidine present at position 34 of the AUA codon-specific tRNA(Ile) that contains the anticodon CAU, in an ATP-dependent manner. Cytidine is converted to lysidine, thus changing the amino acid specificity of the tRNA from methionine to isoleucine. The protein is tRNA(Ile)-lysidine synthase of Xylella fastidiosa (strain 9a5c).